The chain runs to 219 residues: Cytidylate kinase (219 aa).

15–23 (GPAASGKGT) provides a ligand contact to ATP.

This sequence belongs to the cytidylate kinase family. Type 1 subfamily.

It localises to the cytoplasm. It carries out the reaction CMP + ATP = CDP + ADP. The enzyme catalyses dCMP + ATP = dCDP + ADP. This chain is Cytidylate kinase, found in Brucella abortus (strain S19).